We begin with the raw amino-acid sequence, 280 residues long: NAD kinase (280 aa).

Catalysis depends on Asp-67, which acts as the Proton acceptor. Residues 67–68 (DG), Arg-72, 138–139 (ND), Asp-167, Ala-175, 178–183 (TAYSLS), and Gln-237 contribute to the NAD(+) site.

The protein belongs to the NAD kinase family. A divalent metal cation is required as a cofactor.

It is found in the cytoplasm. The catalysed reaction is NAD(+) + ATP = ADP + NADP(+) + H(+). Functionally, involved in the regulation of the intracellular balance of NAD and NADP, and is a key enzyme in the biosynthesis of NADP. Catalyzes specifically the phosphorylation on 2'-hydroxyl of the adenosine moiety of NAD to yield NADP. The sequence is that of NAD kinase from Aeropyrum pernix (strain ATCC 700893 / DSM 11879 / JCM 9820 / NBRC 100138 / K1).